We begin with the raw amino-acid sequence, 200 residues long: Probable molybdenum cofactor guanylyltransferase (200 aa).

Residues 9-11 (LAG), K21, D69, and D100 contribute to the GTP site. Mg(2+) is bound at residue D100.

This sequence belongs to the MobA family. It depends on Mg(2+) as a cofactor.

The protein resides in the cytoplasm. It carries out the reaction Mo-molybdopterin + GTP + H(+) = Mo-molybdopterin guanine dinucleotide + diphosphate. In terms of biological role, transfers a GMP moiety from GTP to Mo-molybdopterin (Mo-MPT) cofactor (Moco or molybdenum cofactor) to form Mo-molybdopterin guanine dinucleotide (Mo-MGD) cofactor. In Bacillus mycoides (strain KBAB4) (Bacillus weihenstephanensis), this protein is Probable molybdenum cofactor guanylyltransferase.